The chain runs to 370 residues: A-type ATP synthase subunit C (370 aa).

It belongs to the V-ATPase V0D/AC39 subunit family. Has multiple subunits with at least A(3), B(3), C, D, E, F, H, I and proteolipid K(x).

The protein localises to the cell membrane. Functionally, component of the A-type ATP synthase that produces ATP from ADP in the presence of a proton gradient across the membrane. This Pyrococcus horikoshii (strain ATCC 700860 / DSM 12428 / JCM 9974 / NBRC 100139 / OT-3) protein is A-type ATP synthase subunit C.